We begin with the raw amino-acid sequence, 224 residues long: Uracil phosphoribosyltransferase (224 aa).

Residue K38–K42 coordinates GTP. 5-phospho-alpha-D-ribose 1-diphosphate is bound by residues R87, R112, and D140 to T148. Uracil contacts are provided by residues I204 and G209 to A211. D210 is a binding site for 5-phospho-alpha-D-ribose 1-diphosphate.

It belongs to the UPRTase family. It depends on Mg(2+) as a cofactor.

The enzyme catalyses UMP + diphosphate = 5-phospho-alpha-D-ribose 1-diphosphate + uracil. It functions in the pathway pyrimidine metabolism; UMP biosynthesis via salvage pathway; UMP from uracil: step 1/1. Its activity is regulated as follows. Allosterically activated by GTP. Its function is as follows. Catalyzes the conversion of uracil and 5-phospho-alpha-D-ribose 1-diphosphate (PRPP) to UMP and diphosphate. In Thermococcus gammatolerans (strain DSM 15229 / JCM 11827 / EJ3), this protein is Uracil phosphoribosyltransferase.